The chain runs to 247 residues: 5'-nucleotidase SurE (247 aa).

Residues Asp8, Asp9, Ser39, and Asn91 each contribute to the a divalent metal cation site.

Belongs to the SurE nucleotidase family. A divalent metal cation serves as cofactor.

Its subcellular location is the cytoplasm. It carries out the reaction a ribonucleoside 5'-phosphate + H2O = a ribonucleoside + phosphate. Its function is as follows. Nucleotidase that shows phosphatase activity on nucleoside 5'-monophosphates. This chain is 5'-nucleotidase SurE, found in Leptospira biflexa serovar Patoc (strain Patoc 1 / Ames).